A 97-amino-acid polypeptide reads, in one-letter code: Large ribosomal subunit protein eL21 (97 aa).

Belongs to the eukaryotic ribosomal protein eL21 family.

This chain is Large ribosomal subunit protein eL21, found in Methanospirillum hungatei JF-1 (strain ATCC 27890 / DSM 864 / NBRC 100397 / JF-1).